The following is a 320-amino-acid chain: Ribosomal RNA small subunit methyltransferase H (320 aa).

Residues 42–44 (GGH), Asp-62, Phe-86, Asp-108, and Gln-115 each bind S-adenosyl-L-methionine.

Belongs to the methyltransferase superfamily. RsmH family.

The protein localises to the cytoplasm. It catalyses the reaction cytidine(1402) in 16S rRNA + S-adenosyl-L-methionine = N(4)-methylcytidine(1402) in 16S rRNA + S-adenosyl-L-homocysteine + H(+). In terms of biological role, specifically methylates the N4 position of cytidine in position 1402 (C1402) of 16S rRNA. The polypeptide is Ribosomal RNA small subunit methyltransferase H (Yersinia enterocolitica serotype O:8 / biotype 1B (strain NCTC 13174 / 8081)).